We begin with the raw amino-acid sequence, 101 residues long: Urease subunit beta (101 aa).

It belongs to the urease beta subunit family. As to quaternary structure, heterotrimer of UreA (gamma), UreB (beta) and UreC (alpha) subunits. Three heterotrimers associate to form the active enzyme.

Its subcellular location is the cytoplasm. It carries out the reaction urea + 2 H2O + H(+) = hydrogencarbonate + 2 NH4(+). The protein operates within nitrogen metabolism; urea degradation; CO(2) and NH(3) from urea (urease route): step 1/1. The protein is Urease subunit beta of Dechloromonas aromatica (strain RCB).